The sequence spans 668 residues: Hemocyanin subunit D (668 aa).

Positions 1–22 (MDTRVLRLTLALVALSGVLADS) are cleaved as a signal peptide. The Cu cation site is built by His-206, His-210, and His-236. A glycan (N-linked (GlcNAc...) asparagine) is linked at Asn-322. 3 residues coordinate Cu cation: His-357, His-361, and His-397. Residues Cys-567 and Cys-614 are joined by a disulfide bond.

The protein belongs to the tyrosinase family. Hemocyanin subfamily. As to quaternary structure, 36-chain polymer consisting of 6 hexamers, each of which includes 4 different chains, A, B, C and D. In terms of tissue distribution, hemolymph.

Its subcellular location is the secreted. The protein localises to the extracellular space. Functionally, hemocyanins are copper-containing oxygen carriers occurring freely dissolved in the hemolymph of many mollusks and arthropods. In Scutigera coleoptrata (House centipede), this protein is Hemocyanin subunit D (HCD).